The chain runs to 278 residues: Small ribosomal subunit protein uS2 (278 aa).

Residues 235-278 (AEAAEEAPKRERKAKAAVKKERTKKEDDDALNANVAGKFAKDEE) are disordered. Over residues 252 to 261 (VKKERTKKED) the composition is skewed to basic and acidic residues.

This sequence belongs to the universal ribosomal protein uS2 family.

The chain is Small ribosomal subunit protein uS2 from Parabacteroides distasonis (strain ATCC 8503 / DSM 20701 / CIP 104284 / JCM 5825 / NCTC 11152).